Consider the following 249-residue polypeptide: Putative [LysW]-aminoadipate/[LysW]-glutamate kinase (249 aa).

Substrate is bound by residues Arg64 and Asn166.

This sequence belongs to the acetylglutamate kinase family. LysZ subfamily.

It is found in the cytoplasm. It carries out the reaction [amino-group carrier protein]-C-terminal-N-(1,4-dicarboxybutan-1-yl)-L-glutamine + ATP = [amino-group carrier protein]-C-terminal-N-(1-carboxy-5-phosphooxy-5-oxopentan-1-yl)-L-glutamine + ADP. It catalyses the reaction [amino-group carrier protein]-C-terminal-gamma-(L-glutamyl)-L-glutamate + ATP = [amino-group carrier protein]-C-terminal-gamma-(5-phospho-L-glutamyl)-L-glutamate + ADP. It functions in the pathway amino-acid biosynthesis; L-lysine biosynthesis via AAA pathway; L-lysine from L-alpha-aminoadipate (Thermus route): step 2/5. Its pathway is amino-acid biosynthesis; L-arginine biosynthesis. Functionally, involved in both the arginine and lysine biosynthetic pathways. Phosphorylates the LysW-bound precursors glutamate (for arginine biosynthesis), respectively alpha-aminoadipate (for lysine biosynthesis). In Pyrococcus horikoshii (strain ATCC 700860 / DSM 12428 / JCM 9974 / NBRC 100139 / OT-3), this protein is Putative [LysW]-aminoadipate/[LysW]-glutamate kinase.